A 236-amino-acid chain; its full sequence is Rab-like protein 3 (236 aa).

A small GTPase-like region spans residues 1–235 (MASLDRVKVL…GGGALKNFHC (235 aa)). GTP contacts are provided by residues 16–21 (GVGKSS), 148–150 (KLD), and 179–180 (DC).

The protein belongs to the small GTPase superfamily. Rab family. As to quaternary structure, homodimer. Interacts with GPR89; the interaction stabilizes GPR89. Interacts with RAP1GDS1.

In terms of biological role, required for KRAS signaling regulation and modulation of cell proliferation. Regulator of KRAS prenylation, and probably prenylation of other small GTPases. Required for lymphocyte development and function. Not required for myeloid cell development. This is Rab-like protein 3 (Rabl3) from Mus musculus (Mouse).